The following is a 494-amino-acid chain: Guanosine-5'-triphosphate,3'-diphosphate pyrophosphatase (494 aa).

It belongs to the GppA/Ppx family. GppA subfamily.

The catalysed reaction is guanosine 3'-diphosphate 5'-triphosphate + H2O = guanosine 3',5'-bis(diphosphate) + phosphate + H(+). It participates in purine metabolism; ppGpp biosynthesis; ppGpp from GTP: step 2/2. Functionally, catalyzes the conversion of pppGpp to ppGpp. Guanosine pentaphosphate (pppGpp) is a cytoplasmic signaling molecule which together with ppGpp controls the 'stringent response', an adaptive process that allows bacteria to respond to amino acid starvation, resulting in the coordinated regulation of numerous cellular activities. This chain is Guanosine-5'-triphosphate,3'-diphosphate pyrophosphatase, found in Shigella sonnei (strain Ss046).